The chain runs to 35 residues: Z-limacoditoxin(1)-Dv1 (35 aa).

The first 22 residues, 1-22 (MKKTFLPIFLVILLASYALANP), serve as a signal peptide directing secretion. Position 23 is a pyrrolidone carboxylic acid (glutamine 23). Proline 32 bears the Proline amide mark.

It belongs to the limacoditoxin-1 (ACP-like) family. In terms of tissue distribution, expressed by the venom secretory cell of the spine. The spine is a cuticular structure containing a single large nucleated venom-secreting cell at its base. It is an independent unit capable of producing, storing and injecting venom. On the back of D.vulnerans caterpillars, spines are grouped together by 50 to 100 to form scoli, of which there are eight in D.vulnerans.

The protein localises to the secreted. Its function is as follows. Potently activates insect G protein-coupled receptor. It activates the ACP receptor (ACPR) from the mosquito A.aegypti (EC(50)=0.55 nM) with a potency comparable to that of the endogenous ligand. Has no activity on receptors of the closely related neuropeptides adipokinetic hormone and corazonin. In vivo, does not reveal any observable effects when injected into crickets (A.domesticus). Does not induce increase in intracellular calcium in mouse DRG neurons, suggesting that it does not induce pain. This chain is Z-limacoditoxin(1)-Dv1, found in Doratifera vulnerans (Mottled cup moth).